The following is a 315-amino-acid chain: Acetyl-coenzyme A carboxylase carboxyl transferase subunit alpha (315 aa).

The region spanning 36–289 is the CoA carboxyltransferase C-terminal domain; sequence LGKKRLELME…RKAVAAELKV (254 aa).

It belongs to the AccA family. As to quaternary structure, acetyl-CoA carboxylase is a heterohexamer composed of biotin carboxyl carrier protein (AccB), biotin carboxylase (AccC) and two subunits each of ACCase subunit alpha (AccA) and ACCase subunit beta (AccD).

The protein localises to the cytoplasm. It catalyses the reaction N(6)-carboxybiotinyl-L-lysyl-[protein] + acetyl-CoA = N(6)-biotinyl-L-lysyl-[protein] + malonyl-CoA. The protein operates within lipid metabolism; malonyl-CoA biosynthesis; malonyl-CoA from acetyl-CoA: step 1/1. Its function is as follows. Component of the acetyl coenzyme A carboxylase (ACC) complex. First, biotin carboxylase catalyzes the carboxylation of biotin on its carrier protein (BCCP) and then the CO(2) group is transferred by the carboxyltransferase to acetyl-CoA to form malonyl-CoA. This Francisella philomiragia subsp. philomiragia (strain ATCC 25017 / CCUG 19701 / FSC 153 / O#319-036) protein is Acetyl-coenzyme A carboxylase carboxyl transferase subunit alpha.